Reading from the N-terminus, the 193-residue chain is Probable thymidylate kinase (193 aa).

7–14 (GIDGAGKT) serves as a coordination point for ATP.

The protein belongs to the thymidylate kinase family.

It carries out the reaction dTMP + ATP = dTDP + ADP. This chain is Probable thymidylate kinase (tmk), found in Thermoplasma acidophilum (strain ATCC 25905 / DSM 1728 / JCM 9062 / NBRC 15155 / AMRC-C165).